A 399-amino-acid polypeptide reads, in one-letter code: Tryptophan synthase beta chain (399 aa).

Lys-92 is subject to N6-(pyridoxal phosphate)lysine.

This sequence belongs to the TrpB family. In terms of assembly, tetramer of two alpha and two beta chains. Requires pyridoxal 5'-phosphate as cofactor.

It catalyses the reaction (1S,2R)-1-C-(indol-3-yl)glycerol 3-phosphate + L-serine = D-glyceraldehyde 3-phosphate + L-tryptophan + H2O. The protein operates within amino-acid biosynthesis; L-tryptophan biosynthesis; L-tryptophan from chorismate: step 5/5. Functionally, the beta subunit is responsible for the synthesis of L-tryptophan from indole and L-serine. This Legionella pneumophila subsp. pneumophila (strain Philadelphia 1 / ATCC 33152 / DSM 7513) protein is Tryptophan synthase beta chain.